The chain runs to 66 residues: Gas vesicle protein A (66 aa).

This sequence belongs to the gas vesicle GvpA family. As to quaternary structure, the gas vesicle shell is 2 nm thick and consists of a single layer of this protein. It forms helical ribs nearly perpendicular to the long axis of the vesicle.

The protein localises to the gas vesicle shell. Gas vesicles are hollow, gas filled proteinaceous nanostructures found in some microorganisms. During planktonic growth they allow positioning of the organism at a favorable depth for light or nutrient acquisition. GvpA forms the protein shell. The chain is Gas vesicle protein A from Thiocapsa pendens (Amoebobacter pendens).